The chain runs to 146 residues: Acidic phospholipase A2 S14-72F (146 aa).

Positions 1–19 are cleaved as a signal peptide; it reads MYPAHLLVLLAVCVSLLGA. Residues 20–27 constitute a propeptide that is removed on maturation; sequence ASIPPQPL. 7 disulfide bridges follow: C38-C98, C54-C145, C56-C72, C71-C126, C78-C119, C87-C112, and C105-C117. Positions 55, 57, and 59 each coordinate Ca(2+). The active site involves H75. D76 is a binding site for Ca(2+). Residue D120 is part of the active site.

This sequence belongs to the phospholipase A2 family. Group I subfamily. D49 sub-subfamily. Ca(2+) is required as a cofactor. Expressed by the venom gland.

It is found in the secreted. It catalyses the reaction a 1,2-diacyl-sn-glycero-3-phosphocholine + H2O = a 1-acyl-sn-glycero-3-phosphocholine + a fatty acid + H(+). Functionally, snake venom phospholipase A2 (PLA2) that inhibits collagen-induced platelet aggregation. PLA2 catalyzes the calcium-dependent hydrolysis of the 2-acyl groups in 3-sn-phosphoglycerides. This chain is Acidic phospholipase A2 S14-72F, found in Austrelaps superbus (Lowland copperhead snake).